Reading from the N-terminus, the 317-residue chain is Vacuolar arginine/histidine antiporter YPQ2 (317 aa).

Residues 1 to 13 (MSCSNGIWPTVSN) lie on the Vacuolar side of the membrane. In terms of domain architecture, PQ-loop 1 spans 8-71 (WPTVSNLCGS…AKLTGQLLFQ (64 aa)). The helical transmembrane segment at 14–34 (LCGSLSFFTSVISLFPQIIET) threads the bilayer. The Cytoplasmic segment spans residues 35-39 (YRDKS). The chain crosses the membrane as a helical span at residues 40 to 62 (VDGLSPYFLLAWLCGDITSLIGA). At 63 to 71 (KLTGQLLFQ) the chain is on the vacuolar side. Residues 72–94 (ILLAIYFLLNDSFVCGQYYYYGV) traverse the membrane as a helical segment. Residues 95-143 (LHENKLATVGHEPKPLLPELVENGELLREEEDMIQGGSSAESPRSSRRR) lie on the Cytoplasmic side of the membrane. A Phosphoserine modification is found at S136. Residues 144 to 164 (SAITAALAIAHTISTASAYPL) traverse the membrane as a helical segment. Residues 165 to 184 (NVGSTQSQVGPPGDGKNSQL) lie on the Vacuolar side of the membrane. The chain crosses the membrane as a helical span at residues 185–205 (GTILSWIGASFYVGARIPQLI). Positions 185–247 (GTILSWIGAS…SCRFLDNQNK (63 aa)) constitute a PQ-loop 2 domain. Over 206–215 (KNYNRKSTDG) the chain is Cytoplasmic. A helical membrane pass occupies residues 216–236 (LSPFLFATTLLCNITYNLSIF). Residues 237–249 (TSCRFLDNQNKRE) lie on the Vacuolar side of the membrane. Residues 250–270 (FIVNELPFIFGSAGTIAFDLI) form a helical membrane-spanning segment. Topologically, residues 271 to 317 (YFYQYYILYATDMQLRELERELYSPEEDSAAQLVTERTSLLSGETQT) are cytoplasmic.

The protein belongs to the laat-1 family.

It is found in the vacuole membrane. The enzyme catalyses L-histidine(out) + L-arginine(in) = L-histidine(in) + L-arginine(out). Functionally, amino acid transporter that moves arginine across the vacuolar membrane. Active during nitrogen starvation when it exports stored vacuolar arginine to the cytosol, for use as a nitrogen source. Has been shown to function as an arginine/histidine antiporter when substrate is present on both sides of the membrane, but may also function as a uniporter. The polypeptide is Vacuolar arginine/histidine antiporter YPQ2 (YPQ2) (Saccharomyces cerevisiae (strain ATCC 204508 / S288c) (Baker's yeast)).